A 335-amino-acid polypeptide reads, in one-letter code: Phospho-N-acetylmuramoyl-pentapeptide-transferase (335 aa).

10 helical membrane passes run 5 to 25 (IFLA…LMIP), 50 to 70 (TPTM…LIMA), 78 to 98 (MVMV…DDFI), 114 to 133 (LIGQ…RYLG), 145 to 165 (IHLE…VGIT), 177 to 197 (LAAG…TLAA), 200 to 220 (GGGV…AAAV), 236 to 256 (VFMG…LAVL), 262 to 282 (ILLI…LQVF), and 311 to 331 (VVMV…IAYM).

It belongs to the glycosyltransferase 4 family. MraY subfamily. Requires Mg(2+) as cofactor.

Its subcellular location is the cell membrane. It catalyses the reaction UDP-N-acetyl-alpha-D-muramoyl-L-alanyl-gamma-D-glutamyl-meso-2,6-diaminopimeloyl-D-alanyl-D-alanine + di-trans,octa-cis-undecaprenyl phosphate = di-trans,octa-cis-undecaprenyl diphospho-N-acetyl-alpha-D-muramoyl-L-alanyl-D-glutamyl-meso-2,6-diaminopimeloyl-D-alanyl-D-alanine + UMP. It functions in the pathway cell wall biogenesis; peptidoglycan biosynthesis. Functionally, catalyzes the initial step of the lipid cycle reactions in the biosynthesis of the cell wall peptidoglycan: transfers peptidoglycan precursor phospho-MurNAc-pentapeptide from UDP-MurNAc-pentapeptide onto the lipid carrier undecaprenyl phosphate, yielding undecaprenyl-pyrophosphoryl-MurNAc-pentapeptide, known as lipid I. The chain is Phospho-N-acetylmuramoyl-pentapeptide-transferase from Desulfitobacterium hafniense (strain DSM 10664 / DCB-2).